The sequence spans 366 residues: NADH-quinone oxidoreductase subunit D (366 aa).

It belongs to the complex I 49 kDa subunit family. NDH-1 is composed of 14 different subunits. Subunits NuoB, C, D, E, F, and G constitute the peripheral sector of the complex.

It localises to the cell membrane. It catalyses the reaction a quinone + NADH + 5 H(+)(in) = a quinol + NAD(+) + 4 H(+)(out). NDH-1 shuttles electrons from NADH, via FMN and iron-sulfur (Fe-S) centers, to quinones in the respiratory chain. The immediate electron acceptor for the enzyme in this species is believed to be a menaquinone. Couples the redox reaction to proton translocation (for every two electrons transferred, four hydrogen ions are translocated across the cytoplasmic membrane), and thus conserves the redox energy in a proton gradient. The polypeptide is NADH-quinone oxidoreductase subunit D (Bacillus mycoides (strain KBAB4) (Bacillus weihenstephanensis)).